Here is a 367-residue protein sequence, read N- to C-terminus: Peptide chain release factor 2 (367 aa).

Gln254 bears the N5-methylglutamine mark.

The protein belongs to the prokaryotic/mitochondrial release factor family. In terms of processing, methylated by PrmC. Methylation increases the termination efficiency of RF2.

It localises to the cytoplasm. In terms of biological role, peptide chain release factor 2 directs the termination of translation in response to the peptide chain termination codons UGA and UAA. In Leptospira borgpetersenii serovar Hardjo-bovis (strain JB197), this protein is Peptide chain release factor 2.